The following is a 632-amino-acid chain: Probable potassium transport system protein Kup (632 aa).

A run of 12 helical transmembrane segments spans residues 19 to 39 (LLCL…PLYV), 57 to 77 (VIGI…LKYV), 111 to 131 (ILFL…VITP), 147 to 167 (PLLQ…LFML), 175 to 195 (IGAL…LVGL), 213 to 233 (AFAF…AVVL), 257 to 277 (WYGG…ALLL), 286 to 306 (PFFL…ATAA), 347 to 367 (IYIP…VLGF), 376 to 396 (AYGV…FFVL), 404 to 424 (FLLG…FFSA), and 429 to 449 (VAQG…IMIT).

This sequence belongs to the HAK/KUP transporter (TC 2.A.72) family.

The protein resides in the cell inner membrane. The enzyme catalyses K(+)(in) + H(+)(in) = K(+)(out) + H(+)(out). In terms of biological role, transport of potassium into the cell. Likely operates as a K(+):H(+) symporter. This Nitrosospira multiformis (strain ATCC 25196 / NCIMB 11849 / C 71) protein is Probable potassium transport system protein Kup.